The sequence spans 391 residues: Phosphoglycerate kinase (391 aa).

Residues 21 to 23, R36, 59 to 62, R113, and R146 contribute to the substrate site; these read DLN and HLGR. ATP is bound by residues K197, E319, and 345–348; that span reads GGDT.

Belongs to the phosphoglycerate kinase family. Monomer.

Its subcellular location is the cytoplasm. It catalyses the reaction (2R)-3-phosphoglycerate + ATP = (2R)-3-phospho-glyceroyl phosphate + ADP. It participates in carbohydrate degradation; glycolysis; pyruvate from D-glyceraldehyde 3-phosphate: step 2/5. In Pseudoalteromonas translucida (strain TAC 125), this protein is Phosphoglycerate kinase.